The primary structure comprises 421 residues: Gamma-glutamyl phosphate reductase (421 aa).

It belongs to the gamma-glutamyl phosphate reductase family.

It is found in the cytoplasm. It catalyses the reaction L-glutamate 5-semialdehyde + phosphate + NADP(+) = L-glutamyl 5-phosphate + NADPH + H(+). Its pathway is amino-acid biosynthesis; L-proline biosynthesis; L-glutamate 5-semialdehyde from L-glutamate: step 2/2. Functionally, catalyzes the NADPH-dependent reduction of L-glutamate 5-phosphate into L-glutamate 5-semialdehyde and phosphate. The product spontaneously undergoes cyclization to form 1-pyrroline-5-carboxylate. The sequence is that of Gamma-glutamyl phosphate reductase from Herminiimonas arsenicoxydans.